The sequence spans 1179 residues: DNA-directed RNA polymerase subunit beta' (1179 aa).

Positions 60, 62, 75, and 78 each coordinate Zn(2+). Asp450, Asp452, and Asp454 together coordinate Mg(2+). Residues Cys791, Cys865, Cys872, and Cys875 each coordinate Zn(2+).

It belongs to the RNA polymerase beta' chain family. In terms of assembly, the RNAP catalytic core consists of 2 alpha, 1 beta, 1 beta' and 1 omega subunit. When a sigma factor is associated with the core the holoenzyme is formed, which can initiate transcription. Requires Mg(2+) as cofactor. Zn(2+) serves as cofactor.

The catalysed reaction is RNA(n) + a ribonucleoside 5'-triphosphate = RNA(n+1) + diphosphate. Functionally, DNA-dependent RNA polymerase catalyzes the transcription of DNA into RNA using the four ribonucleoside triphosphates as substrates. The chain is DNA-directed RNA polymerase subunit beta' from Alkaliphilus oremlandii (strain OhILAs) (Clostridium oremlandii (strain OhILAs)).